The chain runs to 359 residues: Dual-specificity RNA methyltransferase RlmN (359 aa).

The Proton acceptor role is filled by Glu98. Residues 104-329 (EPKRGTLCIS…LEHGLTATIR (226 aa)) enclose the Radical SAM core domain. The cysteines at positions 111 and 340 are disulfide-linked. [4Fe-4S] cluster contacts are provided by Cys118, Cys122, and Cys125. Residues 166-167 (GE), Ser198, 220-222 (SLH), and Asn297 each bind S-adenosyl-L-methionine. The active-site S-methylcysteine intermediate is the Cys340.

This sequence belongs to the radical SAM superfamily. RlmN family. The cofactor is [4Fe-4S] cluster.

The protein resides in the cytoplasm. It carries out the reaction adenosine(2503) in 23S rRNA + 2 reduced [2Fe-2S]-[ferredoxin] + 2 S-adenosyl-L-methionine = 2-methyladenosine(2503) in 23S rRNA + 5'-deoxyadenosine + L-methionine + 2 oxidized [2Fe-2S]-[ferredoxin] + S-adenosyl-L-homocysteine. The enzyme catalyses adenosine(37) in tRNA + 2 reduced [2Fe-2S]-[ferredoxin] + 2 S-adenosyl-L-methionine = 2-methyladenosine(37) in tRNA + 5'-deoxyadenosine + L-methionine + 2 oxidized [2Fe-2S]-[ferredoxin] + S-adenosyl-L-homocysteine. Functionally, specifically methylates position 2 of adenine 2503 in 23S rRNA and position 2 of adenine 37 in tRNAs. m2A2503 modification seems to play a crucial role in the proofreading step occurring at the peptidyl transferase center and thus would serve to optimize ribosomal fidelity. This Halorhodospira halophila (strain DSM 244 / SL1) (Ectothiorhodospira halophila (strain DSM 244 / SL1)) protein is Dual-specificity RNA methyltransferase RlmN.